The sequence spans 107 residues: U1-lycotoxin-Ls1t (107 aa).

An N-terminal signal peptide occupies residues 1-20 (MMKVLVVVALLVTLISYSSS). A propeptide spanning residues 21-41 (EGIDDLEADELLSLMANEQTR) is cleaved from the precursor. Intrachain disulfides connect cysteine 44/cysteine 59, cysteine 51/cysteine 68, cysteine 58/cysteine 86, and cysteine 70/cysteine 84.

It belongs to the neurotoxin 19 (CSTX) family. 04 (U1-Lctx) subfamily. As to expression, expressed by the venom gland.

The protein localises to the secreted. This is U1-lycotoxin-Ls1t from Lycosa singoriensis (Wolf spider).